The following is a 282-amino-acid chain: Elongation factor Ts (282 aa).

Residues 80-83 (TDFV) are involved in Mg(2+) ion dislocation from EF-Tu.

Belongs to the EF-Ts family.

It is found in the cytoplasm. Associates with the EF-Tu.GDP complex and induces the exchange of GDP to GTP. It remains bound to the aminoacyl-tRNA.EF-Tu.GTP complex up to the GTP hydrolysis stage on the ribosome. This Chlamydia muridarum (strain MoPn / Nigg) protein is Elongation factor Ts (tsf).